The chain runs to 137 residues: Large ribosomal subunit protein uL16 (137 aa).

This sequence belongs to the universal ribosomal protein uL16 family. Part of the 50S ribosomal subunit.

Binds 23S rRNA and is also seen to make contacts with the A and possibly P site tRNAs. In Pseudomonas aeruginosa (strain LESB58), this protein is Large ribosomal subunit protein uL16.